A 400-amino-acid chain; its full sequence is Nicotinate phosphoribosyltransferase (400 aa).

At H220 the chain carries Phosphohistidine; by autocatalysis.

This sequence belongs to the NAPRTase family. In terms of processing, transiently phosphorylated on a His residue during the reaction cycle. Phosphorylation strongly increases the affinity for substrates and increases the rate of nicotinate D-ribonucleotide production. Dephosphorylation regenerates the low-affinity form of the enzyme, leading to product release.

The enzyme catalyses nicotinate + 5-phospho-alpha-D-ribose 1-diphosphate + ATP + H2O = nicotinate beta-D-ribonucleotide + ADP + phosphate + diphosphate. It functions in the pathway cofactor biosynthesis; NAD(+) biosynthesis; nicotinate D-ribonucleotide from nicotinate: step 1/1. Functionally, catalyzes the synthesis of beta-nicotinate D-ribonucleotide from nicotinate and 5-phospho-D-ribose 1-phosphate at the expense of ATP. The chain is Nicotinate phosphoribosyltransferase from Salmonella typhi.